A 124-amino-acid polypeptide reads, in one-letter code: MADDRKALGRWGEQYAAEYLQQLGYQLIASGWHCRWGEIDLIAYDQATLVIIEVRTRRGTAHGSAAESLTLKKRQRLARLLQAYLQALDAAQTPWLGDYRIDAIAITLSRGQPQLEHFQAISIE.

The protein belongs to the UPF0102 family.

This chain is UPF0102 protein Haur_0145, found in Herpetosiphon aurantiacus (strain ATCC 23779 / DSM 785 / 114-95).